Reading from the N-terminus, the 769-residue chain is Homoaconitase, mitochondrial (769 aa).

Residues 1–28 constitute a mitochondrion transit peptide; the sequence is MQSRLLPSGPGRRWISLRVPNTPQRRAF. [4Fe-4S] cluster-binding residues include Cys-391, Cys-460, and Cys-463.

It belongs to the aconitase/IPM isomerase family. Requires [4Fe-4S] cluster as cofactor.

It is found in the mitochondrion. The enzyme catalyses (2R,3S)-homoisocitrate = cis-homoaconitate + H2O. It participates in amino-acid biosynthesis; L-lysine biosynthesis via AAA pathway; L-alpha-aminoadipate from 2-oxoglutarate: step 3/5. In terms of biological role, catalyzes the reversible hydration of cis-homoaconitate to (2R,3S)-homoisocitrate, a step in the alpha-aminoadipate pathway for lysine biosynthesis. The sequence is that of Homoaconitase, mitochondrial (lysA) from Aspergillus niger (strain ATCC MYA-4892 / CBS 513.88 / FGSC A1513).